Consider the following 465-residue polypeptide: Phytase A (465 aa).

Positions 1–26 (MVTLTFLLSAAYLLSGRVSAAPSSAG) are cleaved as a signal peptide. A disulfide bridge links cysteine 30 with cysteine 39. Glutamine 49, tyrosine 50, arginine 80, histidine 81, arginine 84, and threonine 87 together coordinate 1D-myo-inositol hexakisphosphate. 4 cysteine pairs are disulfide-bonded: cysteine 70-cysteine 412, cysteine 213-cysteine 463, cysteine 262-cysteine 280, and cysteine 434-cysteine 442. Histidine 81 (nucleophile) is an active-site residue. The N-linked (GlcNAc...) asparagine glycan is linked to asparagine 104. Residue arginine 164 coordinates 1D-myo-inositol hexakisphosphate. The N-linked (GlcNAc...) asparagine glycan is linked to asparagine 205. Aspartate 209 lines the 1D-myo-inositol hexakisphosphate pocket. Asparagine 228 is a glycosylation site (N-linked (GlcNAc...) asparagine). Lysine 299 contacts 1D-myo-inositol hexakisphosphate. N-linked (GlcNAc...) asparagine glycans are attached at residues asparagine 337 and asparagine 350. 1D-myo-inositol hexakisphosphate is bound by residues histidine 359 and aspartate 360. N-linked (GlcNAc...) asparagine glycosylation occurs at asparagine 374.

It belongs to the histidine acid phosphatase family. As to quaternary structure, monomer.

It is found in the secreted. It carries out the reaction 1D-myo-inositol hexakisphosphate + H2O = 1D-myo-inositol 1,2,4,5,6-pentakisphosphate + phosphate. The enzyme catalyses 1D-myo-inositol 1,2,4,5,6-pentakisphosphate + H2O = 1D-myo-inositol 1,2,5,6-tetrakisphosphate + phosphate. It catalyses the reaction 1D-myo-inositol 1,2,5,6-tetrakisphosphate + H2O = 1D-myo-inositol 1,2,6-trisphosphate + phosphate. The catalysed reaction is 1D-myo-inositol 1,2,6-trisphosphate + H2O = 1D-myo-inositol 1,2-bisphosphate + phosphate. It carries out the reaction 1D-myo-inositol 1,2-bisphosphate + H2O = 1D-myo-inositol 2-phosphate + phosphate. Catalyzes the phosphate monoester hydrolysis of phytic acid (myo-inositol hexakisphosphate), which results in the stepwise formation of myo-inositol pentakis-, tetrakis-, tris-, bis-, and monophosphates, as well as the liberation of inorganic phosphate. Myo-inositol 2-monophosphate is the end product. Has a broad substrate specificity and is also able to dephosphorylate other classic acid phosphatase substrates such as p-nitrophenyl phosphate, phenyl phosphate, fructose 1,6-bisphosphate, fructose 6-phosphate, glucose 6-phosphate, ribose 5-phosphate, alpha-glycerophosphate, beta-glycerophosphate, 3-phosphoglycerate, phosphoenolpyruvate, as well as ADP and ATP. The protein is Phytase A (phyA) of Aspergillus fumigatus (strain ATCC MYA-4609 / CBS 101355 / FGSC A1100 / Af293) (Neosartorya fumigata).